Reading from the N-terminus, the 229-residue chain is Putative N-acetylmannosamine-6-phosphate 2-epimerase (229 aa).

Belongs to the NanE family.

It catalyses the reaction an N-acyl-D-glucosamine 6-phosphate = an N-acyl-D-mannosamine 6-phosphate. It participates in amino-sugar metabolism; N-acetylneuraminate degradation; D-fructose 6-phosphate from N-acetylneuraminate: step 3/5. Its function is as follows. Converts N-acetylmannosamine-6-phosphate (ManNAc-6-P) to N-acetylglucosamine-6-phosphate (GlcNAc-6-P). The polypeptide is Putative N-acetylmannosamine-6-phosphate 2-epimerase (Cutibacterium acnes (strain DSM 16379 / KPA171202) (Propionibacterium acnes)).